The sequence spans 245 residues: 1-(5-phosphoribosyl)-5-[(5-phosphoribosylamino)methylideneamino] imidazole-4-carboxamide isomerase (245 aa).

Asp8 serves as the catalytic Proton acceptor. Catalysis depends on Asp130, which acts as the Proton donor.

It belongs to the HisA/HisF family.

It localises to the cytoplasm. It carries out the reaction 1-(5-phospho-beta-D-ribosyl)-5-[(5-phospho-beta-D-ribosylamino)methylideneamino]imidazole-4-carboxamide = 5-[(5-phospho-1-deoxy-D-ribulos-1-ylimino)methylamino]-1-(5-phospho-beta-D-ribosyl)imidazole-4-carboxamide. It functions in the pathway amino-acid biosynthesis; L-histidine biosynthesis; L-histidine from 5-phospho-alpha-D-ribose 1-diphosphate: step 4/9. The chain is 1-(5-phosphoribosyl)-5-[(5-phosphoribosylamino)methylideneamino] imidazole-4-carboxamide isomerase from Pseudomonas putida (strain ATCC 47054 / DSM 6125 / CFBP 8728 / NCIMB 11950 / KT2440).